Reading from the N-terminus, the 247-residue chain is MWGPGVTAEGLSVAPAPPPLLPLLLLLALALVAPSRGGGGCAELACGERERCCDATNATAVRCCKLPLHAFLDNVGWFVRKLSGLLILLVLFAIGYFLQRIICPSPRRYPRGQARPGQRPGPPGGAGPLGGAGPPDDDDDSPALLRDEAAAGSQDSLLDSGGGGRGRGGGGRSDPSCASEHEMRVVSPVFLQLPSYEEVKYLPTYEESMRLQQLSPGEVVLPVSVLGRPRGGVAAEPDGGEGRYPLI.

Positions 1 to 35 are cleaved as a signal peptide; sequence MWGPGVTAEGLSVAPAPPPLLPLLLLLALALVAPS. Asparagine 57 carries an N-linked (GlcNAc...) asparagine glycan. Residues 82–102 form a helical membrane-spanning segment; sequence LSGLLILLVLFAIGYFLQRII. The disordered stretch occupies residues 109-179; the sequence is YPRGQARPGQ…GGRSDPSCAS (71 aa). Residues 160–172 show a composition bias toward gly residues; it reads SGGGGRGRGGGGR.

It is found in the membrane. This is an uncharacterized protein from Homo sapiens (Human).